A 1240-amino-acid polypeptide reads, in one-letter code: DNA-directed RNA polymerase subunit beta (1240 aa).

This sequence belongs to the RNA polymerase beta chain family. As to quaternary structure, the RNAP catalytic core consists of 2 alpha, 1 beta, 1 beta' and 1 omega subunit. When a sigma factor is associated with the core the holoenzyme is formed, which can initiate transcription.

The catalysed reaction is RNA(n) + a ribonucleoside 5'-triphosphate = RNA(n+1) + diphosphate. Functionally, DNA-dependent RNA polymerase catalyzes the transcription of DNA into RNA using the four ribonucleoside triphosphates as substrates. The chain is DNA-directed RNA polymerase subunit beta from Phytoplasma australiense.